The primary structure comprises 275 residues: Membrane protein insertase YidC 1 (275 aa).

The signal sequence occupies residues 1–25 (MRKVLRVKKNIKIARIVPLVLLLVA). Residue C26 is the site of N-palmitoyl cysteine attachment. A lipid anchor (S-diacylglycerol cysteine) is attached at C26. The next 5 membrane-spanning stretches (helical) occupy residues 58-78 (SIGVGIILFTLTIRLMLMPLF), 129-149 (YASLLPLLIQMPVMIALFQAL), 171-191 (LYLLPVLAAVFTFLSTWLTNL), 198-216 (VMMTVMIYVMPLMIFFMGF), and 222-240 (VVLYWTVSNAFQVVQLLLL).

This sequence belongs to the OXA1/ALB3/YidC family. Type 2 subfamily.

Its subcellular location is the cell membrane. Its function is as follows. Required for the insertion and/or proper folding and/or complex formation of integral membrane proteins into the membrane. Involved in integration of membrane proteins that insert both dependently and independently of the Sec translocase complex, as well as at least some lipoproteins. This is Membrane protein insertase YidC 1 from Streptococcus pyogenes serotype M6 (strain ATCC BAA-946 / MGAS10394).